Reading from the N-terminus, the 429-residue chain is Ribosomal RNA small subunit methyltransferase B (429 aa).

Residues 254 to 260 (CAAPGGK), Asp277, Asp303, and Asp322 contribute to the S-adenosyl-L-methionine site. The Nucleophile role is filled by Cys375.

The protein belongs to the class I-like SAM-binding methyltransferase superfamily. RsmB/NOP family.

It is found in the cytoplasm. The enzyme catalyses cytidine(967) in 16S rRNA + S-adenosyl-L-methionine = 5-methylcytidine(967) in 16S rRNA + S-adenosyl-L-homocysteine + H(+). Functionally, specifically methylates the cytosine at position 967 (m5C967) of 16S rRNA. This is Ribosomal RNA small subunit methyltransferase B from Cronobacter sakazakii (strain ATCC BAA-894) (Enterobacter sakazakii).